The chain runs to 431 residues: 3-phosphoshikimate 1-carboxyvinyltransferase (431 aa).

3-phosphoshikimate is bound by residues Lys-22, Ser-23, and Arg-27. Lys-22 provides a ligand contact to phosphoenolpyruvate. Phosphoenolpyruvate contacts are provided by Gly-94 and Arg-122. Residues Ser-168, Ser-169, Gln-170, Ser-196, Asp-315, and Lys-342 each contribute to the 3-phosphoshikimate site. Residue Gln-170 participates in phosphoenolpyruvate binding. Asp-315 (proton acceptor) is an active-site residue. The phosphoenolpyruvate site is built by Arg-346, Arg-390, and Lys-414.

This sequence belongs to the EPSP synthase family. As to quaternary structure, monomer.

It is found in the cytoplasm. It carries out the reaction 3-phosphoshikimate + phosphoenolpyruvate = 5-O-(1-carboxyvinyl)-3-phosphoshikimate + phosphate. It participates in metabolic intermediate biosynthesis; chorismate biosynthesis; chorismate from D-erythrose 4-phosphate and phosphoenolpyruvate: step 6/7. Its function is as follows. Catalyzes the transfer of the enolpyruvyl moiety of phosphoenolpyruvate (PEP) to the 5-hydroxyl of shikimate-3-phosphate (S3P) to produce enolpyruvyl shikimate-3-phosphate and inorganic phosphate. The polypeptide is 3-phosphoshikimate 1-carboxyvinyltransferase (Nitrosomonas europaea (strain ATCC 19718 / CIP 103999 / KCTC 2705 / NBRC 14298)).